The following is a 62-amino-acid chain: Large ribosomal subunit protein uL29 (62 aa).

This sequence belongs to the universal ribosomal protein uL29 family.

The sequence is that of Large ribosomal subunit protein uL29 from Geobacter sp. (strain M21).